Consider the following 293-residue polypeptide: Adenylyl-sulfate kinase 2, chloroplastic (293 aa).

The transit peptide at 1 to 59 (MEGLAIRASRPSVFCSIPGLGGDSHRKPPSDGFLKLPASSIPADSRKLVANSTSFHPIS) directs the protein to the chloroplast. An ATP-binding site is contributed by 122–130 (GLSGSGKST). Substrate-binding positions include Asp-152, Arg-155, Arg-169, Asn-172, 195 to 196 (IS), and Gly-245. Ser-196 acts as the Phosphoserine intermediate in catalysis.

The protein belongs to the APS kinase family. Interacts with APK1. As to expression, expressed in root vasculature, root tips, leaf epidermal cells and funiculus of developing seeds.

The protein localises to the plastid. It localises to the chloroplast. It catalyses the reaction adenosine 5'-phosphosulfate + ATP = 3'-phosphoadenylyl sulfate + ADP + H(+). It participates in sulfur metabolism; hydrogen sulfide biosynthesis; sulfite from sulfate: step 2/3. In terms of biological role, catalyzes the synthesis of activated sulfate. Essential for plant reproduction and viability. Required for the production of glucosinolates. The sequence is that of Adenylyl-sulfate kinase 2, chloroplastic (APK2) from Arabidopsis thaliana (Mouse-ear cress).